We begin with the raw amino-acid sequence, 813 residues long: Microtubule-associated protein 6 (813 aa).

S-palmitoyl cysteine attachment occurs at residues Cys-5, Cys-10, and Cys-11. Disordered stretches follow at residues Ala-36–Asp-283, Val-314–Ser-651, and Pro-756–Pro-813. Residues Gly-41–Gln-50 are compositionally biased toward pro residues. Positions Gln-51–Ala-62 are enriched in low complexity. Residues Gly-100 to Ser-112 show a composition bias toward gly residues. The residue at position 102 (Ser-102) is a Phosphoserine. A mn 1 region spans residues Asp-118 to Ser-141. The segment covering Met-121–Ser-141 has biased composition (basic and acidic residues). The tract at residues Arg-126 to Arg-140 is calmodulin-binding. Tyr-143 carries the phosphotyrosine modification. The segment covering Pro-149–Trp-173 has biased composition (basic and acidic residues). The mn 2 stretch occupies residues Glu-153–Lys-176. The tract at residues Ala-162 to Lys-176 is calmodulin-binding. Phosphoserine is present on Ser-187. Calmodulin-binding stretches follow at residues Pro-189–Arg-203, Arg-306–Lys-320, Arg-357–Pro-371, and Pro-384–Lys-398. The tract at residues Ser-298–Pro-321 is mn 3. Positions Pro-367–Lys-376 are enriched in basic and acidic residues. A compositionally biased stretch (basic residues) spans Lys-383–Lys-398. Residues Lys-420–Glu-439 show a composition bias toward basic and acidic residues. Residues Gln-443 to Pro-454 are compositionally biased toward polar residues. A compositionally biased stretch (basic and acidic residues) spans Lys-637–Ser-651. Ser-812 is subject to Phosphoserine.

It belongs to the STOP family. As to quaternary structure, interacts with calmodulin (via C-terminus); the interaction is dependent on Ca(2+). Interacts (via C-terminus) with TMEM106B (via N-terminus). Interacts with ZDHHC17 (via ANK repeats). Interacts with ZDHHC13 (via ANK repeats). In terms of processing, palmitoylated. Probably depalmitoylated by ABHD17A, ABHD17B and ABHD17C. During neuronal polarization, palmitoylation and depalmitoylation cycles regulate MAP6 shuttling between secretory vesicles and microtubules, and its polarized distribution in the axon. Expressed in brain (at protein level). Expressed in spinal cord. Isoform 2 expression is up-regulated in the prefrontal cortex (Brodmann's area 46) of patients with schizophrenia (postmortem brain study).

The protein localises to the cytoplasm. The protein resides in the cytoskeleton. It is found in the golgi apparatus. Its subcellular location is the cell projection. It localises to the axon. The protein localises to the dendrite. The protein resides in the cytoplasmic vesicle. It is found in the secretory vesicle membrane. Functionally, involved in microtubule stabilization in many cell types, including neuronal cells. Specifically has microtubule cold stabilizing activity. Involved in dendrite morphogenesis and maintenance by regulating lysosomal trafficking via its interaction with TMEM106B. Regulates KIF5A-mediated axonal cargo transport. Regulates axonal growth during neuron polarization. The protein is Microtubule-associated protein 6 (MAP6) of Homo sapiens (Human).